The following is a 219-amino-acid chain: Ribose-5-phosphate isomerase A (219 aa).

Substrate contacts are provided by residues 28–31 (TGST), 81–84 (DGAD), and 94–97 (KGGG). Glutamate 103 serves as the catalytic Proton acceptor. Residue lysine 121 coordinates substrate.

Belongs to the ribose 5-phosphate isomerase family. Homodimer.

It carries out the reaction aldehydo-D-ribose 5-phosphate = D-ribulose 5-phosphate. It participates in carbohydrate degradation; pentose phosphate pathway; D-ribose 5-phosphate from D-ribulose 5-phosphate (non-oxidative stage): step 1/1. Catalyzes the reversible conversion of ribose-5-phosphate to ribulose 5-phosphate. In Pectobacterium carotovorum subsp. carotovorum (strain PC1), this protein is Ribose-5-phosphate isomerase A.